A 153-amino-acid polypeptide reads, in one-letter code: Profilin (153 aa).

The protein belongs to the profilin family. Occurs in many kinds of cells as a complex with monomeric actin in a 1:1 ratio.

The protein localises to the cytoplasm. It localises to the cytoskeleton. Its function is as follows. Binds to actin and affects the structure of the cytoskeleton. At high concentrations, profilin prevents the polymerization of actin, whereas it enhances it at low concentrations. By binding to PIP2, it inhibits the formation of IP3 and DG. The sequence is that of Profilin from Tetrahymena pyriformis.